Here is a 196-residue protein sequence, read N- to C-terminus: Probable peptidyl-prolyl cis-trans isomerase (196 aa).

Residues 1 to 26 (MSFIRSALAAAAFVALSIGAVQTASA) form the signal peptide. Residues 29-194 (PENTVILKLK…KIIKATIEAD (166 aa)) enclose the PPIase cyclophilin-type domain.

It belongs to the cyclophilin-type PPIase family.

The protein resides in the periplasm. The catalysed reaction is [protein]-peptidylproline (omega=180) = [protein]-peptidylproline (omega=0). PPIases accelerate the folding of proteins. It catalyzes the cis-trans isomerization of proline imidic peptide bonds in oligopeptides. The sequence is that of Probable peptidyl-prolyl cis-trans isomerase (ppi) from Brucella melitensis biotype 1 (strain ATCC 23456 / CCUG 17765 / NCTC 10094 / 16M).